The chain runs to 92 residues: Small ribosomal subunit protein bS20 (92 aa).

2 disordered regions span residues 1–25 (MALRHKSAQKRHRQSLKRRAINRAK) and 68–92 (HKNAAARKKSRLAKAINKAKAAQQA). Residues 80-92 (AKAINKAKAAQQA) show a composition bias toward low complexity.

This sequence belongs to the bacterial ribosomal protein bS20 family.

In terms of biological role, binds directly to 16S ribosomal RNA. This is Small ribosomal subunit protein bS20 from Deinococcus radiodurans (strain ATCC 13939 / DSM 20539 / JCM 16871 / CCUG 27074 / LMG 4051 / NBRC 15346 / NCIMB 9279 / VKM B-1422 / R1).